Consider the following 388-residue polypeptide: Pepsin A-3 (388 aa).

An N-terminal signal peptide occupies residues Met-1–Cys-15. A propeptide spans Ile-16 to Leu-62 (activation peptide). The Peptidase A1 domain occupies Tyr-76–Ala-385. Asp-94 is a catalytic residue. 2 cysteine pairs are disulfide-bonded: Cys-107–Cys-112 and Cys-268–Cys-272. Asp-277 is a catalytic residue. Cysteines 311 and 344 form a disulfide.

The protein belongs to the peptidase A1 family.

It is found in the secreted. It catalyses the reaction Preferential cleavage: hydrophobic, preferably aromatic, residues in P1 and P1' positions. Cleaves 1-Phe-|-Val-2, 4-Gln-|-His-5, 13-Glu-|-Ala-14, 14-Ala-|-Leu-15, 15-Leu-|-Tyr-16, 16-Tyr-|-Leu-17, 23-Gly-|-Phe-24, 24-Phe-|-Phe-25 and 25-Phe-|-Tyr-26 bonds in the B chain of insulin.. Its function is as follows. Shows particularly broad specificity; although bonds involving phenylalanine and leucine are preferred, many others are also cleaved to some extent. In Homo sapiens (Human), this protein is Pepsin A-3 (PGA3).